The following is a 464-amino-acid chain: ATP synthase subunit beta (464 aa).

151–158 (GGAGVGKT) lines the ATP pocket.

This sequence belongs to the ATPase alpha/beta chains family. As to quaternary structure, F-type ATPases have 2 components, CF(1) - the catalytic core - and CF(0) - the membrane proton channel. CF(1) has five subunits: alpha(3), beta(3), gamma(1), delta(1), epsilon(1). CF(0) has three main subunits: a(1), b(2) and c(9-12). The alpha and beta chains form an alternating ring which encloses part of the gamma chain. CF(1) is attached to CF(0) by a central stalk formed by the gamma and epsilon chains, while a peripheral stalk is formed by the delta and b chains.

It is found in the cell membrane. It catalyses the reaction ATP + H2O + 4 H(+)(in) = ADP + phosphate + 5 H(+)(out). Its function is as follows. Produces ATP from ADP in the presence of a proton gradient across the membrane. The catalytic sites are hosted primarily by the beta subunits. This is ATP synthase subunit beta from Bacillus cytotoxicus (strain DSM 22905 / CIP 110041 / 391-98 / NVH 391-98).